A 391-amino-acid chain; its full sequence is Ferrochelatase (391 aa).

Residues His196 and Glu281 each coordinate Fe cation.

It belongs to the ferrochelatase family.

The protein localises to the cytoplasm. The catalysed reaction is heme b + 2 H(+) = protoporphyrin IX + Fe(2+). Its pathway is porphyrin-containing compound metabolism; protoheme biosynthesis; protoheme from protoporphyrin-IX: step 1/1. Catalyzes the ferrous insertion into protoporphyrin IX. The chain is Ferrochelatase from Synechococcus sp. (strain WH7803).